The following is a 422-amino-acid chain: ATP phosphoribosyltransferase regulatory subunit (422 aa).

The protein belongs to the class-II aminoacyl-tRNA synthetase family. HisZ subfamily. In terms of assembly, heteromultimer composed of HisG and HisZ subunits.

The protein resides in the cytoplasm. It participates in amino-acid biosynthesis; L-histidine biosynthesis; L-histidine from 5-phospho-alpha-D-ribose 1-diphosphate: step 1/9. Its function is as follows. Required for the first step of histidine biosynthesis. May allow the feedback regulation of ATP phosphoribosyltransferase activity by histidine. This Clostridium botulinum (strain Langeland / NCTC 10281 / Type F) protein is ATP phosphoribosyltransferase regulatory subunit.